The primary structure comprises 408 residues: 26S proteasome regulatory subunit 6B homolog (408 aa).

Ala2 is subject to N-acetylalanine. Position 16 is a phosphoserine (Ser16). Residues 28 to 75 (EDLYGRLKSLERQLEFTDIQEEYVKDEQKNLKRELLRAQEEVKRIQSV) are a coiled coil. 196 to 203 (GPPGTGKT) contributes to the ATP binding site.

This sequence belongs to the AAA ATPase family. In terms of assembly, component of the 19S regulatory particle (RP/PA700) base subcomplex of the 26S proteasome. The 26S proteasome is composed of a core protease (CP), known as the 20S proteasome, capped at one or both ends by the 19S regulatory particle (RP/PA700). The RP/PA700 complex is composed of at least 17 different subunits in two subcomplexes, the base and the lid, which form the portions proximal and distal to the 20S proteolytic core, respectively. As to expression, expressed in dark-grown etiolated seedlings, roots, leaves, stems and flowers.

The protein resides in the cytoplasm. It localises to the nucleus. Functionally, the 26S proteasome is involved in the ATP-dependent degradation of ubiquitinated proteins. The regulatory (or ATPase) complex confers ATP dependency and substrate specificity to the 26S complex. This is 26S proteasome regulatory subunit 6B homolog (RPT3) from Arabidopsis thaliana (Mouse-ear cress).